Here is a 483-residue protein sequence, read N- to C-terminus: Probable glycosyltransferase 6 (483 aa).

The Cytoplasmic portion of the chain corresponds to 1–40 (MAASETAPFGVSAASKGGGGVAGARAQHGQLAVAGRVHDA). The helical; Signal-anchor for type II membrane protein transmembrane segment at 41–61 (LVFAAGAVAAVLVLLATASFL) threads the bilayer. Residues 62-483 (SPMPVTNLVA…PLPFDYPAAR (422 aa)) lie on the Lumenal side of the membrane. A glycan (N-linked (GlcNAc...) asparagine) is linked at Asn144.

This sequence belongs to the glycosyltransferase 34 family.

The protein resides in the golgi apparatus membrane. Probable glycosyltransferase that may be involved in the biosynthesis of xyloglucan. This is Probable glycosyltransferase 6 from Oryza sativa subsp. indica (Rice).